The following is a 501-amino-acid chain: Probable cytosol aminopeptidase (501 aa).

Mn(2+) is bound by residues Lys267 and Asp272. Lys279 is a catalytic residue. Mn(2+) is bound by residues Asp290, Asp349, and Glu351. Arg353 is a catalytic residue.

It belongs to the peptidase M17 family. Mn(2+) serves as cofactor.

Its subcellular location is the cytoplasm. The enzyme catalyses Release of an N-terminal amino acid, Xaa-|-Yaa-, in which Xaa is preferably Leu, but may be other amino acids including Pro although not Arg or Lys, and Yaa may be Pro. Amino acid amides and methyl esters are also readily hydrolyzed, but rates on arylamides are exceedingly low.. It catalyses the reaction Release of an N-terminal amino acid, preferentially leucine, but not glutamic or aspartic acids.. Functionally, presumably involved in the processing and regular turnover of intracellular proteins. Catalyzes the removal of unsubstituted N-terminal amino acids from various peptides. This is Probable cytosol aminopeptidase from Hamiltonella defensa subsp. Acyrthosiphon pisum (strain 5AT).